Reading from the N-terminus, the 32-residue chain is Delta-conotoxin-like CnVIC (32 aa).

3 cysteine pairs are disulfide-bonded: cysteine 3–cysteine 18, cysteine 10–cysteine 22, and cysteine 17–cysteine 27. 4-hydroxyproline is present on residues proline 6 and proline 14.

Belongs to the conotoxin O1 superfamily. As to expression, expressed by the venom duct.

The protein localises to the secreted. Its function is as follows. Delta-conotoxins bind to site 6 of voltage-gated sodium channels (Nav) and inhibit the inactivation process. This toxin acts on Nav1.2/SCN2A, Nav1.4/SCN4A, Nav1.5/SCN5A (weak activity), Nav1.6/SCN8A (EC(50)=2.5 uM). The sequence is that of Delta-conotoxin-like CnVIC from Conus consors (Singed cone).